The chain runs to 277 residues: Omega-amidase NIT2 (277 aa).

A CN hydrolase domain is found at 4 to 248 (FRLAVVQLHV…ESVVYADIDL (245 aa)). The Proton acceptor role is filled by Glu43. The Proton donor role is filled by Lys112. Residue Cys153 is the Nucleophile of the active site.

Belongs to the carbon-nitrogen hydrolase superfamily. NIT1/NIT2 family. Homodimer.

It is found in the cytoplasm. The catalysed reaction is 2-oxoglutaramate + H2O = 2-oxoglutarate + NH4(+). The enzyme catalyses 2-oxosuccinamate + H2O = oxaloacetate + NH4(+). Has omega-amidase activity. The role of omega-amidase is to remove potentially toxic intermediates by converting 2-oxoglutaramate and 2-oxosuccinamate to biologically useful 2-oxoglutarate and oxaloacetate, respectively. This Danio rerio (Zebrafish) protein is Omega-amidase NIT2 (nit2).